We begin with the raw amino-acid sequence, 544 residues long: Chaperonin GroEL (544 aa).

ATP-binding positions include 30-33, K51, 87-91, G415, 478-480, and D494; these read TLGP, DGTTT, and NAA.

This sequence belongs to the chaperonin (HSP60) family. In terms of assembly, forms a cylinder of 14 subunits composed of two heptameric rings stacked back-to-back. Interacts with the co-chaperonin GroES.

It localises to the cytoplasm. It catalyses the reaction ATP + H2O + a folded polypeptide = ADP + phosphate + an unfolded polypeptide.. Its function is as follows. Together with its co-chaperonin GroES, plays an essential role in assisting protein folding. The GroEL-GroES system forms a nano-cage that allows encapsulation of the non-native substrate proteins and provides a physical environment optimized to promote and accelerate protein folding. In Geobacter sulfurreducens (strain ATCC 51573 / DSM 12127 / PCA), this protein is Chaperonin GroEL.